Consider the following 351-residue polypeptide: CCN family member 3 (351 aa).

Positions 1-21 (MSVFLRKQCLCLGFLLLHLLN) are cleaved as a signal peptide. In terms of domain architecture, IGFBP N-terminal spans 25-99 (ATLRCPSRCP…NNETGICMVP (75 aa)). 6 disulfide bridges follow: Cys29-Cys55, Cys33-Cys57, Cys37-Cys58, Cys44-Cys61, Cys69-Cys83, and Cys75-Cys96. N-linked (GlcNAc...) asparagine glycosylation is present at Asn91. One can recognise a VWFC domain in the interval 102–168 (DNCVFDGVIY…GECCEKWTCG (67 aa)). The 46-residue stretch at 199-244 (NCIEQTTEWSACSKSCGMGLSTRVTNRNLQCEMVKQTRLCMVRPCE) folds into the TSP type-1 domain. The S-palmitoyl cysteine moiety is linked to residue Cys238. Cystine bridges form between Cys258–Cys295, Cys275–Cys309, Cys286–Cys325, Cys289–Cys327, and Cys294–Cys331. Positions 258 to 332 (CLRTKKSLKS…GTCTCHSNCP (75 aa)) constitute a CTCK domain. Asn274 is a glycosylation site (N-linked (GlcNAc...) asparagine).

Belongs to the CCN family. As to quaternary structure, interacts with FBLN1. Interacts (via CTCK domain) with NOTCH1 (via the EGF-like repeat region). Interacts with GJA1/CX43. Interacts with ITGA5:ITGB1, ITGAV:ITGB3 and ITGAV:ITGB5. Interacts with ZDHHC22; the interaction may lead to CCN3 palmitoylation. Post-translationally, may be palmitoylated on Cys-238, which is important for extracellular secretion. Widely expressed. Highly expressed in neurons of dorsal root ganglia and dorsal horn of the spinal cord (at protein level). Expressed in astrocytes (at protein level). In cartilage, dominantly expressed in the chondrocyte territorial matrix.

It is found in the secreted. The protein resides in the cytoplasm. Its subcellular location is the cell junction. It localises to the gap junction. Its function is as follows. Immediate-early protein playing a role in various cellular processes including proliferation, adhesion, migration, differentiation and survival. Acts by binding to integrins or membrane receptors such as NOTCH1. Essential regulator of hematopoietic stem and progenitor cell function. Inhibits myogenic differentiation through the activation of Notch-signaling pathway. Inhibits vascular smooth muscle cells proliferation by increasing expression of cell-cycle regulators such as CDKN2B or CDKN1A independently of TGFB1 signaling. Ligand of integrins ITGAV:ITGB3 and ITGA5:ITGB1, acts directly upon endothelial cells to stimulate pro-angiogenic activities and induces angiogenesis. In endothelial cells, supports cell adhesion, induces directed cell migration (chemotaxis) and promotes cell survival. Also plays a role in cutaneous wound healing acting as integrin receptor ligand. Supports skin fibroblast adhesion through ITGA5:ITGB1 and ITGA6:ITGB1 and induces fibroblast chemotaxis through ITGAV:ITGB5. Seems to enhance bFGF-induced DNA synthesis in fibroblasts. Involved in bone regeneration as a negative regulator. Enhances the articular chondrocytic phenotype, whereas it repressed the one representing endochondral ossification. Impairs pancreatic beta-cell function, inhibits beta-cell proliferation and insulin secretion. Plays a role as negative regulator of endothelial pro-inflammatory activation reducing monocyte adhesion, its anti-inflammatory effects occur secondary to the inhibition of NF-kappaB signaling pathway. Contributes to the control and coordination of inflammatory processes in atherosclerosis. Attenuates inflammatory pain through regulation of IL1B- and TNF-induced MMP9, MMP2 and CCL2 expression. Inhibits MMP9 expression through ITGB1 engagement. Brain osteoanabolic hormone. During lactation, maintains the maternal skeleton and viability of offspring. This Rattus norvegicus (Rat) protein is CCN family member 3 (Ccn3).